A 1296-amino-acid chain; its full sequence is DNA-directed RNA polymerase subunit beta' (1296 aa).

Residues cysteine 60, cysteine 62, cysteine 75, and cysteine 78 each coordinate Zn(2+). A compositionally biased stretch (basic and acidic residues) spans glutamate 185–aspartate 202. The segment at glutamate 185–glutamine 204 is disordered. Mg(2+) contacts are provided by aspartate 535, aspartate 537, and aspartate 539. Cysteine 877, cysteine 954, cysteine 961, and cysteine 964 together coordinate Zn(2+).

It belongs to the RNA polymerase beta' chain family. In terms of assembly, the RNAP catalytic core consists of 2 alpha, 1 beta, 1 beta' and 1 omega subunit. When a sigma factor is associated with the core the holoenzyme is formed, which can initiate transcription. Mg(2+) serves as cofactor. Requires Zn(2+) as cofactor.

It carries out the reaction RNA(n) + a ribonucleoside 5'-triphosphate = RNA(n+1) + diphosphate. In terms of biological role, DNA-dependent RNA polymerase catalyzes the transcription of DNA into RNA using the four ribonucleoside triphosphates as substrates. This is DNA-directed RNA polymerase subunit beta' from Kocuria rhizophila (strain ATCC 9341 / DSM 348 / NBRC 103217 / DC2201).